Consider the following 350-residue polypeptide: C5a anaphylatoxin chemotactic receptor 1 (350 aa).

Residues 1-37 lie on the Extracellular side of the membrane; that stretch reads MDSFNYTTPDYGHYDDKDTLDPNTPVDKTSNTLRVPD. The required for CHIPS binding stretch occupies residues 10–18; sequence DYGHYDDKD. Residues Tyr-11 and Tyr-14 each carry the sulfotyrosine modification. The interval 21–30 is involved in C5a binding; that stretch reads DPNTPVDKTS. A helical membrane pass occupies residues 38 to 64; the sequence is ILALVIFAVVFLVGVLGNALVVWVTAF. At 65 to 69 the chain is on the cytoplasmic side; sequence EVKRT. The helical transmembrane segment at 70–93 threads the bilayer; that stretch reads INAIWFLNLAVADFLSCLALPILF. The Extracellular segment spans residues 94–110; it reads TSIVQHHHWPFGGAACR. Cys-109 and Cys-188 form a disulfide bridge. Residues 111-132 traverse the membrane as a helical segment; it reads ILPSLILLNMYASILLLATISA. Over 133–153 the chain is Cytoplasmic; the sequence is DRFLLVFKPIWCQNFRGAGLA. The helical transmembrane segment at 154–174 threads the bilayer; it reads WIACAVAWGLALLLTIPSFLY. Over 175 to 200 the chain is Extracellular; the sequence is RVVREEYFPPKVLCGVDYSHDKQRER. The chain crosses the membrane as a helical span at residues 201–226; it reads AVAVVRLVLGFLWPLLTLTICYTFIL. At 227 to 242 the chain is on the cytoplasmic side; the sequence is LRTWSRRATRSTKTLK. Residues 243–265 traverse the membrane as a helical segment; sequence VVVAVVASFFIFWLPYQVTGIMM. Residues 266 to 282 are Extracellular-facing; that stretch reads SFLEPSSPTFLLLKKLD. The chain crosses the membrane as a helical span at residues 283 to 303; the sequence is SLCVSFAYINCCINPIIYVVA. Residues 304–350 lie on the Cytoplasmic side of the membrane; it reads GQGFQGRLRKSLPSLLRNVLTEESVVRESKSFTRSTVDTMAEKTQAV. Residues Ser-314, Ser-317, Ser-327, Ser-332, Ser-334, and Ser-338 each carry the phosphoserine modification.

It belongs to the G-protein coupled receptor 1 family. In terms of assembly, homodimer. May also form higher-order oligomers. Interacts (when phosphorylated) with ARRB1 and ARRB2; the interaction is associated with internalization of C5aR. Interacts (via N-terminal domain) with S.aureus chemotaxis inhibitory protein (CHIPS); the interaction blocks the receptor and may thus inhibit the immune response. In terms of processing, sulfation plays a critical role in the association of C5aR with C5a, but no significant role in the ability of the receptor to transduce a signal and mobilize calcium in response to a small peptide agonist. Sulfation at Tyr-14 is important for CHIPS binding. Post-translationally, phosphorylated on serine residues in response to C5a binding, resulting in internalization of the receptor and short-term desensitization to C5a.

Its subcellular location is the cell membrane. It is found in the cytoplasmic vesicle. Functionally, receptor for the chemotactic and inflammatory peptide anaphylatoxin C5a. The ligand interacts with at least two sites on the receptor: a high-affinity site on the extracellular N-terminus, and a second site in the transmembrane region which activates downstream signaling events. Receptor activation stimulates chemotaxis, granule enzyme release, intracellular calcium release and superoxide anion production. The protein is C5a anaphylatoxin chemotactic receptor 1 (C5AR1) of Gorilla gorilla gorilla (Western lowland gorilla).